We begin with the raw amino-acid sequence, 514 residues long: MKLAYWMYAGPAHIGTLRVASSFKNVHAIMHAPLGDDYFNVMRSMLERERDFTPVTASIVDRHVLARGSQEKVVETITRKDKEEQPDLILLTPTCTSSILQEDLQNFVNRAATESKSDVILADVNHYRVNELQAADRTLEQIVRFYIEKAKTQNDLATIKTEKPSVNIIGIFTLGFHNHHDCRELKRLLTDLGISINEVIPEGGSIKNLKNLPKAWFNLIPYREVGLMTAKYLEKELNMPFVATTPMGVIDTAICIREIEAILNFTNQSKIDKEPYNFEDYIDQQTRFVSQAAWFSRSIDCQNLTGKKAIVFGDSTHAASMTKILAREMGIRISCAGTYCKHDADWFREQVSGFCDSVLITDDHTKVGDMIARVEPAAIFGTQMERHVGKRLDIPCGVISAPVHIQNFPLGYRPFLGYEGTNQIADLVYNSFTLGMEDHLLEIFGGHDTKQVITKSLSTDSNLTWTIEGLAELNKIPGFVRAKIKRNTEKFARENNISEITIETMYAAKEAVGA.

Asp36 contributes to the [4Fe-4S] cluster binding site. Asp300 functions as the Proton donor in the catalytic mechanism. Position 435–436 (Gly435–Met436) interacts with substrate.

It belongs to the ChlB/BchB/BchZ family. As to quaternary structure, protochlorophyllide reductase is composed of three subunits; ChlL, ChlN and ChlB. Forms a heterotetramer of two ChlB and two ChlN subunits. The cofactor is [4Fe-4S] cluster.

It localises to the plastid. Its subcellular location is the chloroplast. The enzyme catalyses chlorophyllide a + oxidized 2[4Fe-4S]-[ferredoxin] + 2 ADP + 2 phosphate = protochlorophyllide a + reduced 2[4Fe-4S]-[ferredoxin] + 2 ATP + 2 H2O. It participates in porphyrin-containing compound metabolism; chlorophyll biosynthesis (light-independent). Its function is as follows. Component of the dark-operative protochlorophyllide reductase (DPOR) that uses Mg-ATP and reduced ferredoxin to reduce ring D of protochlorophyllide (Pchlide) to form chlorophyllide a (Chlide). This reaction is light-independent. The NB-protein (ChlN-ChlB) is the catalytic component of the complex. This chain is Light-independent protochlorophyllide reductase subunit B, found in Pleurastrum terricola (Filamentous green alga).